The primary structure comprises 206 residues: Thymidylate kinase (206 aa).

Gly-14–Ser-21 serves as a coordination point for ATP.

The protein belongs to the thymidylate kinase family.

It carries out the reaction dTMP + ATP = dTDP + ADP. In terms of biological role, phosphorylation of dTMP to form dTDP in both de novo and salvage pathways of dTTP synthesis. The polypeptide is Thymidylate kinase (Rickettsia bellii (strain OSU 85-389)).